The primary structure comprises 500 residues: AMP phosphorylase (500 aa).

Residues Gly166, 192–197 (SRAVTS), and Thr201 contribute to the AMP site. Asp254 acts as the Proton donor in catalysis. Residues Ser262 and Lys286 each contribute to the AMP site.

The protein belongs to the thymidine/pyrimidine-nucleoside phosphorylase family. Type 2 subfamily.

It catalyses the reaction AMP + phosphate = alpha-D-ribose 1,5-bisphosphate + adenine. The catalysed reaction is CMP + phosphate = cytosine + alpha-D-ribose 1,5-bisphosphate. The enzyme catalyses UMP + phosphate = alpha-D-ribose 1,5-bisphosphate + uracil. In terms of biological role, catalyzes the conversion of AMP and phosphate to adenine and ribose 1,5-bisphosphate (R15P). Exhibits phosphorylase activity toward CMP and UMP in addition to AMP. Functions in an archaeal AMP degradation pathway, together with R15P isomerase and RubisCO. The sequence is that of AMP phosphorylase (deoA) from Natronomonas pharaonis (strain ATCC 35678 / DSM 2160 / CIP 103997 / JCM 8858 / NBRC 14720 / NCIMB 2260 / Gabara) (Halobacterium pharaonis).